The primary structure comprises 134 residues: Small ribosomal subunit protein uS11 (134 aa).

Over residues 113-122 the composition is skewed to polar residues; sequence SSITDATPQP. A disordered region spans residues 113–134; it reads SSITDATPQPHNGCRPTKRRKV.

It belongs to the universal ribosomal protein uS11 family. In terms of assembly, part of the 30S ribosomal subunit. Interacts with proteins S7 and S18. Binds to IF-3.

Functionally, located on the platform of the 30S subunit, it bridges several disparate RNA helices of the 16S rRNA. Forms part of the Shine-Dalgarno cleft in the 70S ribosome. The sequence is that of Small ribosomal subunit protein uS11 from Corynebacterium aurimucosum (strain ATCC 700975 / DSM 44827 / CIP 107346 / CN-1) (Corynebacterium nigricans).